The following is a 280-amino-acid chain: Transcription factor HES-1 (280 aa).

A disordered region spans residues 1 to 44; sequence MPADIMEKNSSSPVAATPASVNTTPDKPKTASEHRKSSKPIMEK. Positions 10–21 are enriched in low complexity; it reads SSSPVAATPASV. Residues 26-35 are compositionally biased toward basic and acidic residues; the sequence is DKPKTASEHR. Residues 34 to 91 enclose the bHLH domain; the sequence is HRKSSKPIMEKRRRARINESLSQLKTLILDALKKDSSRHSKLEKADILEMTVKHLRNL. The Orange domain maps to 110 to 143; that stretch reads YRAGFSECMNEVTRFLSTCEGVNTEVRTRLLGHL. Disordered regions lie at residues 157 to 200 and 254 to 280; these read GQPH…PPGG and TSVG…PWRN. Composition is skewed to pro residues over residues 164–174 and 181–200; these read QAPPPPPPGPG and FAPP…PPGG. Positions 254–271 are enriched in polar residues; the sequence is TSVGPNAVSPSSGPSLTA. A WRPW motif motif is present at residues 275 to 278; that stretch reads WRPW.

As to quaternary structure, transcription repression requires formation of a complex with a corepressor protein of the Groucho/TLE family. Interacts (via WPRW motif) with TLE1, and more weakly with TLE2. Interacts with HES6. Interacts with SIRT1. Interacts with an FA complex, composed of FANCA, FANCF, FANCG and FANCL, but not of FANCC, nor FANCE. In terms of processing, (Microbial infection) Ubiquitinated via human cytomegalovirus/HCMV protein IE1 that assembles a HES1 ubiquitination complex; leading to HES1 proteasomal degradation.

The protein resides in the nucleus. Functionally, transcriptional repressor of genes that require a bHLH protein for their transcription. May act as a negative regulator of myogenesis by inhibiting the functions of MYOD1 and ASH1. Binds DNA on N-box motifs: 5'-CACNAG-3' with high affinity and on E-box motifs: 5'-CANNTG-3' with low affinity. May play a role in a functional FA core complex response to DNA cross-link damage, being required for the stability and nuclear localization of FA core complex proteins, as well as for FANCD2 monoubiquitination in response to DNA damage. This Homo sapiens (Human) protein is Transcription factor HES-1 (HES1).